Consider the following 127-residue polypeptide: Small ribosomal subunit protein uS13 (127 aa).

The interval 97–127 (PVRGQRTKTNARTRKGPRKTVAGKKGVKDLR) is disordered. Over residues 101–118 (QRTKTNARTRKGPRKTVA) the composition is skewed to basic residues.

Belongs to the universal ribosomal protein uS13 family. In terms of assembly, part of the 30S ribosomal subunit. Forms a loose heterodimer with protein S19. Forms two bridges to the 50S subunit in the 70S ribosome.

Functionally, located at the top of the head of the 30S subunit, it contacts several helices of the 16S rRNA. In the 70S ribosome it contacts the 23S rRNA (bridge B1a) and protein L5 of the 50S subunit (bridge B1b), connecting the 2 subunits; these bridges are implicated in subunit movement. Contacts the tRNAs in the A and P-sites. This Rhodopirellula baltica (strain DSM 10527 / NCIMB 13988 / SH1) protein is Small ribosomal subunit protein uS13.